A 278-amino-acid chain; its full sequence is MSAISIGQAVVLGAVEGVTEFLPVSSTGHLKIVEGLMGIPVDDDAVIGFSAVIQVGAIAAVLVYFSKDIMRIVSAWGRGLRDREERYHHDYRFAWWVIYATIPIVLVGLAAKPLIKGPLASLWVVAGSLIVGSGVMWWADRTGRHKRGEDDTSFKDAMLVGGSQILALLFPGFSRSGATMSTALMLDLDRVAATRLSFFLGIPALTGAGLYELKDALGTGAGAAPLAVGTLVSFVVAYASIAWLLKFVAKHTFNSFVVYRIAVGVLLFGLLGTGVLHS.

Transmembrane regions (helical) follow at residues 45 to 65 (AVIGFSAVIQVGAIAAVLVYF), 95 to 115 (WWVIYATIPIVLVGLAAKPLI), 119 to 139 (LASLWVVAGSLIVGSGVMWWA), 191 to 211 (VAATRLSFFLGIPALTGAGLY), 225 to 245 (PLAVGTLVSFVVAYASIAWLL), and 256 to 276 (FVVYRIAVGVLLFGLLGTGVL).

This sequence belongs to the UppP family.

Its subcellular location is the cell membrane. It catalyses the reaction di-trans,octa-cis-undecaprenyl diphosphate + H2O = di-trans,octa-cis-undecaprenyl phosphate + phosphate + H(+). In terms of biological role, catalyzes the dephosphorylation of undecaprenyl diphosphate (UPP). Confers resistance to bacitracin. In Streptomyces coelicolor (strain ATCC BAA-471 / A3(2) / M145), this protein is Undecaprenyl-diphosphatase 1.